We begin with the raw amino-acid sequence, 156 residues long: Endogenous retrovirus group K member 25 Pro protein (156 aa).

The 76-residue stretch at 21–96 (FEGLVDTGAD…IPLNLWGRDL (76 aa)) folds into the Peptidase A2 domain. Residue Asp-26 is part of the active site. In terms of domain architecture, G-patch spans 111 to 156 (YSPTSQKIMTKMGYIPGKGLGKNEDGIKIPVEAKINQKREGIGYPF).

It belongs to the peptidase A2 family. HERV class-II K(HML-2) subfamily. In terms of assembly, active as a homodimer. Autoproteolytically processed at the N-terminus. Expected C-terminal autoprocessing not detected. The sequence shown is that of the processed Pro protein.

It catalyses the reaction Processing at the authentic HIV-1 PR recognition site and release of the mature p17 matrix and the p24 capsid protein, as a result of the cleavage of the -SQNY-|-PIVQ- cleavage site.. In terms of biological role, retroviral proteases have roles in processing of the primary translation products and the maturation of the viral particle. Endogenous Pro proteins may have kept, lost or modified their original function during evolution. This endogenous protein has retained most of the characteristics of retroviral proteases. The sequence is that of Endogenous retrovirus group K member 25 Pro protein (ERVK-25) from Homo sapiens (Human).